The primary structure comprises 170 residues: Probable inosine/xanthosine triphosphatase (170 aa).

E31 is a Mg(2+) binding site.

It belongs to the YjjX NTPase family. In terms of assembly, homodimer. The cofactor is Mg(2+). Mn(2+) is required as a cofactor.

The catalysed reaction is XTP + H2O = XDP + phosphate + H(+). It carries out the reaction ITP + H2O = IDP + phosphate + H(+). Its function is as follows. Phosphatase that hydrolyzes non-canonical purine nucleotides such as XTP and ITP to their respective diphosphate derivatives. Probably excludes non-canonical purines from DNA/RNA precursor pool, thus preventing their incorporation into DNA/RNA and avoiding chromosomal lesions. The chain is Probable inosine/xanthosine triphosphatase from Oceanobacillus iheyensis (strain DSM 14371 / CIP 107618 / JCM 11309 / KCTC 3954 / HTE831).